The sequence spans 209 residues: 3-demethoxyubiquinol 3-hydroxylase (209 aa).

The Fe cation site is built by glutamate 58, glutamate 88, histidine 91, glutamate 140, glutamate 172, and histidine 175.

The protein belongs to the COQ7 family. Fe cation is required as a cofactor.

It localises to the cell membrane. It catalyses the reaction a 5-methoxy-2-methyl-3-(all-trans-polyprenyl)benzene-1,4-diol + AH2 + O2 = a 3-demethylubiquinol + A + H2O. It participates in cofactor biosynthesis; ubiquinone biosynthesis. In terms of biological role, catalyzes the hydroxylation of 2-nonaprenyl-3-methyl-6-methoxy-1,4-benzoquinol during ubiquinone biosynthesis. This Polaromonas naphthalenivorans (strain CJ2) protein is 3-demethoxyubiquinol 3-hydroxylase.